The primary structure comprises 127 residues: Small ribosomal subunit protein uS12 (127 aa).

The residue at position 89 (D89) is a 3-methylthioaspartic acid. Positions 101–127 are disordered; the sequence is ALDTSGVAGRTQRRSKYGAKRPKEAKK. A compositionally biased stretch (basic residues) spans 111-127; the sequence is TQRRSKYGAKRPKEAKK.

Belongs to the universal ribosomal protein uS12 family. In terms of assembly, part of the 30S ribosomal subunit. Contacts proteins S8 and S17. May interact with IF1 in the 30S initiation complex.

In terms of biological role, with S4 and S5 plays an important role in translational accuracy. Its function is as follows. Interacts with and stabilizes bases of the 16S rRNA that are involved in tRNA selection in the A site and with the mRNA backbone. Located at the interface of the 30S and 50S subunits, it traverses the body of the 30S subunit contacting proteins on the other side and probably holding the rRNA structure together. The combined cluster of proteins S8, S12 and S17 appears to hold together the shoulder and platform of the 30S subunit. The chain is Small ribosomal subunit protein uS12 from Flavobacterium johnsoniae (strain ATCC 17061 / DSM 2064 / JCM 8514 / BCRC 14874 / CCUG 350202 / NBRC 14942 / NCIMB 11054 / UW101) (Cytophaga johnsonae).